We begin with the raw amino-acid sequence, 146 residues long: Large ribosomal subunit protein uL15 (146 aa).

Residues 1–58 are disordered; it reads MKLNELSPPKGARTARKRKGRGPGSGLGKTAGKGHKGQKARSGGGVRPGFEGGQMPVH. Gly residues-rich tracts occupy residues 22–31 and 42–52; these read GPGSGLGKTA and SGGGVRPGFEG.

It belongs to the universal ribosomal protein uL15 family. Part of the 50S ribosomal subunit.

In terms of biological role, binds to the 23S rRNA. This chain is Large ribosomal subunit protein uL15, found in Desulfatibacillum aliphaticivorans.